The primary structure comprises 273 residues: MSDTLTNTGRYQATFAKLKAEGRGAFVPFVTLGDPSPELSLKIIDTLVQNGADALELGFPFSDPLADGPVIQGANLRSLAAGTTPTACFELLAQVRAKYPELPIGLLLYANLVFANGIDAFYAKAQQAGVDSVLIADVPVEESAPFSEAAKAHGIAPIFIAPPNADSETLALVSASGEGYTYLLSRAGVTGTDTKAGVPVEEILSKLKTFNAPPPLLGFGIAEPAQVTAAIKAGAAGAISGSAVVKIIETHQHDEAKLLATLGDFTRAMKAAT.

Active-site proton acceptor residues include glutamate 56 and aspartate 67.

Belongs to the TrpA family. In terms of assembly, tetramer of two alpha and two beta chains.

The catalysed reaction is (1S,2R)-1-C-(indol-3-yl)glycerol 3-phosphate + L-serine = D-glyceraldehyde 3-phosphate + L-tryptophan + H2O. Its pathway is amino-acid biosynthesis; L-tryptophan biosynthesis; L-tryptophan from chorismate: step 5/5. Its function is as follows. The alpha subunit is responsible for the aldol cleavage of indoleglycerol phosphate to indole and glyceraldehyde 3-phosphate. The polypeptide is Tryptophan synthase alpha chain (Shewanella baltica (strain OS185)).